The primary structure comprises 176 residues: Conidiation-specific protein 8 (176 aa).

2 disordered regions span residues Met1–Ile66 and Ala79–Phe162. Positions Ala79–Thr99 are enriched in low complexity.

This is Conidiation-specific protein 8 (con-8) from Neurospora crassa (strain ATCC 24698 / 74-OR23-1A / CBS 708.71 / DSM 1257 / FGSC 987).